Consider the following 481-residue polypeptide: MADTITPREEDYSQWYIDLVRSAKLADYSDVRGCMVIRPNGYAIWEKMQAALDGMFKATGHVNAYFPLFIPESYIQKEADHIEGFAPECAVVTHGGGEELAEKLYVRPTSETVIWASYKKWIQSYRDLPLLINQWANVVRWEMRTRLFLRTSEFLWQEGHTAHATPEEAQDEVLRMINVYKTFAEEYMAMPVLIGRKTDSEKFAGADETWCIEAMMQDKKALQAGTSHNLGQNFAKAFDCQFQSKNGTLEYVWATSWGVSTRLIGALIMAHSDDRGLVLPPKLASRQVVIVPILRGDKQAVAEKAHALADELNSNGIHAFVDDSEQNSPGWKFAEYELQGIPVRLEIGPRDISSNICIAARRDTGEKQQIALDDTFAASISSLLDAIQQSMFKSALEFREANTREVSSYDEFKKCIDKGFLIAHWDGREETEAKIKEETKATIRLIPEDPDFRKKYSMDEPGICICSGNPSKGKVVFAKAY.

This sequence belongs to the class-II aminoacyl-tRNA synthetase family. ProS type 3 subfamily. As to quaternary structure, homodimer.

The protein localises to the cytoplasm. It catalyses the reaction tRNA(Pro) + L-proline + ATP = L-prolyl-tRNA(Pro) + AMP + diphosphate. Functionally, catalyzes the attachment of proline to tRNA(Pro) in a two-step reaction: proline is first activated by ATP to form Pro-AMP and then transferred to the acceptor end of tRNA(Pro). In Chlorobium phaeobacteroides (strain BS1), this protein is Proline--tRNA ligase.